Reading from the N-terminus, the 409-residue chain is Putative lipoate-protein ligase A (409 aa).

The region spanning 146–330 (GPDNCRLLFY…RFQKTFKVDG (185 aa)) is the BPL/LPL catalytic domain. ATP contacts are provided by residues Arg-188, 193–196 (GTVL), and Lys-249. Position 249 (Lys-249) interacts with (R)-lipoate.

This sequence belongs to the LplA family. As to quaternary structure, monomer.

It catalyses the reaction L-lysyl-[lipoyl-carrier protein] + (R)-lipoate + ATP = N(6)-[(R)-lipoyl]-L-lysyl-[lipoyl-carrier protein] + AMP + diphosphate + H(+). It participates in protein modification; protein lipoylation via exogenous pathway; protein N(6)-(lipoyl)lysine from lipoate: step 1/2. It functions in the pathway protein modification; protein lipoylation via exogenous pathway; protein N(6)-(lipoyl)lysine from lipoate: step 2/2. Functionally, catalyzes both the ATP-dependent activation of exogenously supplied lipoate to lipoyl-AMP and the transfer of the activated lipoyl onto the lipoyl domains of lipoate-dependent enzymes. The protein is Putative lipoate-protein ligase A (AIM22) of Saccharomyces cerevisiae (strain RM11-1a) (Baker's yeast).